Reading from the N-terminus, the 511-residue chain is MGRLALISVTDKTGIVDFARQLTEEFDFEIISSGGTAKTLQSAGIPVIKVGEYTGSPEILGGRVKTLHPRIHGGILARRDWQSDLAEMEANQIRPFDLVVVNLYPFEQTIANPDVTTAQAIEQIDIGGPAMLRASAKNFAHLTVISNPKYYEQYLSQLRQNNGEISLEFRQKMAGETFALTNAYDGAIAAYFASLNGETTRFNLAGNALQTLRYGENPHQSATWYGSGTMAQGWGKATLLQGKELSYNNLVDLEAARRLIAEFGSEEPAAAILKHTNPCGVAIGGSLVEAYTKAFNADAISAFGGIVALNQAIDEATAKELTKTFLECVVAPDCSPEAQDILAKKSKVRILLLPDLTTGEKQTVKVIAGGFLVQAADDVVETPDEWRVVTEKQPTPAQLAELLFAWKVSKHVKSNAIVVTKNQTTLGVGAGQMNRVGSVKIALEQAAEAAKGGYLASDGFFPFDDSVRTAAQFGIEAIVQPGGSLKDQDSINAANELGLIMVLTGIRHFLH.

Residues 1–146 (MGRLALISVT…KNFAHLTVIS (146 aa)) form the MGS-like domain.

It belongs to the PurH family.

It carries out the reaction (6R)-10-formyltetrahydrofolate + 5-amino-1-(5-phospho-beta-D-ribosyl)imidazole-4-carboxamide = 5-formamido-1-(5-phospho-D-ribosyl)imidazole-4-carboxamide + (6S)-5,6,7,8-tetrahydrofolate. It catalyses the reaction IMP + H2O = 5-formamido-1-(5-phospho-D-ribosyl)imidazole-4-carboxamide. It participates in purine metabolism; IMP biosynthesis via de novo pathway; 5-formamido-1-(5-phospho-D-ribosyl)imidazole-4-carboxamide from 5-amino-1-(5-phospho-D-ribosyl)imidazole-4-carboxamide (10-formyl THF route): step 1/1. Its pathway is purine metabolism; IMP biosynthesis via de novo pathway; IMP from 5-formamido-1-(5-phospho-D-ribosyl)imidazole-4-carboxamide: step 1/1. The polypeptide is Bifunctional purine biosynthesis protein PurH (Microcystis aeruginosa (strain NIES-843 / IAM M-2473)).